The following is a 179-amino-acid chain: Large ribosomal subunit protein uL5 (179 aa).

It belongs to the universal ribosomal protein uL5 family. In terms of assembly, part of the 50S ribosomal subunit; part of the 5S rRNA/L5/L18/L25 subcomplex. Contacts the 5S rRNA and the P site tRNA. Forms a bridge to the 30S subunit in the 70S ribosome.

Functionally, this is one of the proteins that bind and probably mediate the attachment of the 5S RNA into the large ribosomal subunit, where it forms part of the central protuberance. In the 70S ribosome it contacts protein S13 of the 30S subunit (bridge B1b), connecting the 2 subunits; this bridge is implicated in subunit movement. Contacts the P site tRNA; the 5S rRNA and some of its associated proteins might help stabilize positioning of ribosome-bound tRNAs. This chain is Large ribosomal subunit protein uL5, found in Serratia proteamaculans (strain 568).